Reading from the N-terminus, the 149-residue chain is Calmodulin, striated muscle (149 aa).

EF-hand domains lie at 8–43, 44–79, 81–116, and 117–149; these read EQIAEFKEAFSLFDRDGDGCITTMELGTVMRSLGQN, PTEAELQDMVGEVDADGSGTIDFPEFLSLMARKMRD, DSEEEIREAFRVFDKDGNGYISAAELRHVMTNLGEK, and LTDEEVDEMIKEADCNNDGQVNYEEFVRMMTEK. Ca(2+)-binding residues include Asp-21, Asp-23, Asp-25, Cys-27, Glu-32, Asp-57, Asp-59, Ser-61, Thr-63, Glu-68, Asp-94, Asp-96, Asn-98, Tyr-100, and Glu-105. Lys-116 carries the N6,N6,N6-trimethyllysine modification. Residues Asp-130, Asn-132, Asp-134, Gln-136, and Glu-141 each contribute to the Ca(2+) site.

Belongs to the calmodulin family.

This chain is Calmodulin, striated muscle (CCM1), found in Gallus gallus (Chicken).